A 332-amino-acid polypeptide reads, in one-letter code: Cell growth regulator with RING finger domain protein 1 (332 aa).

The RING-type zinc-finger motif lies at 274–309 (CVVCQNGGVNWVLLPCRHACLCDSCVCYFKQCPMCR).

As to expression, highly expressed in testis, lower levels of expression is seen in skeletal muscle, liver, lung and brain.

It localises to the nucleus. The protein localises to the endoplasmic reticulum. Able to inhibit growth in several cell lines. In Rattus norvegicus (Rat), this protein is Cell growth regulator with RING finger domain protein 1 (Cgrrf1).